We begin with the raw amino-acid sequence, 141 residues long: Galactose-6-phosphate isomerase subunit LacA (141 aa).

It belongs to the LacAB/RpiB family. As to quaternary structure, heteromultimeric protein consisting of LacA and LacB.

The enzyme catalyses aldehydo-D-galactose 6-phosphate = keto-D-tagatose 6-phosphate. It participates in carbohydrate metabolism; D-galactose 6-phosphate degradation; D-tagatose 6-phosphate from D-galactose 6-phosphate: step 1/1. The polypeptide is Galactose-6-phosphate isomerase subunit LacA (Streptococcus pneumoniae (strain ATCC 700669 / Spain 23F-1)).